We begin with the raw amino-acid sequence, 535 residues long: INSYN2B protein (535 aa).

Disordered stretches follow at residues 23-85 (LVKQ…SFPR), 215-346 (EARE…RSSS), and 360-387 (KLPS…PRQE). A compositionally biased stretch (polar residues) spans 46–59 (KNPTGVTEVNTQTP). The segment covering 219–232 (SALSPESSAEESNS) has biased composition (low complexity). Composition is skewed to polar residues over residues 258–269 (CSNTNSSASNMP), 307–319 (RTHS…SRSQ), and 361–375 (LPSQ…TGVG). Positions 411-448 (DLQGRLQSVEESLHSNQEKIKVLLNVIQDLEKAHALTE) form a coiled coil. The tract at residues 493–528 (LEEAEPTEEAPSPPKSPAEAPVPEKQDLRRKSKKVK) is disordered.

This sequence belongs to the INSYN2 family.

In Mus musculus (Mouse), this protein is INSYN2B protein (Insyn2b).